Reading from the N-terminus, the 29-residue chain is Cyclotide cter-L (29 aa).

The segment at residues histidine 1–aspartate 29 is a cross-link (cyclopeptide (His-Asp)). Cystine bridges form between cysteine 4/cysteine 20, cysteine 8/cysteine 22, and cysteine 13/cysteine 27.

Post-translationally, contains 3 disulfide bonds. In terms of processing, this is a cyclic peptide.

In terms of biological role, probably participates in a plant defense mechanism. In Clitoria ternatea (Butterfly pea), this protein is Cyclotide cter-L.